The following is a 160-amino-acid chain: Large ribosomal subunit protein uL11 (160 aa).

Belongs to the universal ribosomal protein uL11 family. In terms of assembly, part of the ribosomal stalk of the 50S ribosomal subunit. Interacts with L10 and the large rRNA to form the base of the stalk. L10 forms an elongated spine to which L12 dimers bind in a sequential fashion forming a multimeric L10(L12)X complex.

Its function is as follows. Forms part of the ribosomal stalk which helps the ribosome interact with GTP-bound translation factors. In Methanococcus aeolicus (strain ATCC BAA-1280 / DSM 17508 / OCM 812 / Nankai-3), this protein is Large ribosomal subunit protein uL11.